The chain runs to 187 residues: Protein GrpE (187 aa).

Positions 1-26 are disordered; the sequence is MNDLKNAENGPDEADTPQGAPSQEPD.

It belongs to the GrpE family. In terms of assembly, homodimer.

It localises to the cytoplasm. In terms of biological role, participates actively in the response to hyperosmotic and heat shock by preventing the aggregation of stress-denatured proteins, in association with DnaK and GrpE. It is the nucleotide exchange factor for DnaK and may function as a thermosensor. Unfolded proteins bind initially to DnaJ; upon interaction with the DnaJ-bound protein, DnaK hydrolyzes its bound ATP, resulting in the formation of a stable complex. GrpE releases ADP from DnaK; ATP binding to DnaK triggers the release of the substrate protein, thus completing the reaction cycle. Several rounds of ATP-dependent interactions between DnaJ, DnaK and GrpE are required for fully efficient folding. The chain is Protein GrpE from Methylocella silvestris (strain DSM 15510 / CIP 108128 / LMG 27833 / NCIMB 13906 / BL2).